Consider the following 389-residue polypeptide: Probable peptide chain release factor 1, mitochondrial (389 aa).

The residue at position 259 (Gln-259) is an N5-methylglutamine.

Belongs to the prokaryotic/mitochondrial release factor family. In terms of processing, methylation of glutamine in the GGQ triplet is conserved from bacteria to mammals.

It is found in the mitochondrion. Functionally, mitochondrial peptide chain release factor that directs the termination of translation in response to the peptide chain termination codons UAA and UAG. The chain is Probable peptide chain release factor 1, mitochondrial from Caenorhabditis elegans.